We begin with the raw amino-acid sequence, 668 residues long: DNA ligase (668 aa).

Residues 31–35, 80–81, and Glu112 contribute to the NAD(+) site; these read DAEYD and SL. Lys114 acts as the N6-AMP-lysine intermediate in catalysis. NAD(+) is bound by residues Arg135, Glu172, Lys289, and Lys313. 4 residues coordinate Zn(2+): Cys407, Cys410, Cys425, and Cys431. The region spanning 591 to 668 is the BRCT domain; sequence SVPQPLAGKV…NEEQLIELLN (78 aa).

It belongs to the NAD-dependent DNA ligase family. LigA subfamily. It depends on Mg(2+) as a cofactor. The cofactor is Mn(2+).

It catalyses the reaction NAD(+) + (deoxyribonucleotide)n-3'-hydroxyl + 5'-phospho-(deoxyribonucleotide)m = (deoxyribonucleotide)n+m + AMP + beta-nicotinamide D-nucleotide.. Its function is as follows. DNA ligase that catalyzes the formation of phosphodiester linkages between 5'-phosphoryl and 3'-hydroxyl groups in double-stranded DNA using NAD as a coenzyme and as the energy source for the reaction. It is essential for DNA replication and repair of damaged DNA. The polypeptide is DNA ligase (Aliivibrio fischeri (strain MJ11) (Vibrio fischeri)).